The primary structure comprises 154 residues: 6,7-dimethyl-8-ribityllumazine synthase (154 aa).

5-amino-6-(D-ribitylamino)uracil is bound by residues Phe26, 60–62 (ALE), and 84–86 (CII). Residue 89 to 90 (ET) participates in (2S)-2-hydroxy-3-oxobutyl phosphate binding. Residue His92 is the Proton donor of the active site. Position 117 (Asn117) interacts with 5-amino-6-(D-ribitylamino)uracil. Arg131 is a binding site for (2S)-2-hydroxy-3-oxobutyl phosphate.

The protein belongs to the DMRL synthase family.

The enzyme catalyses (2S)-2-hydroxy-3-oxobutyl phosphate + 5-amino-6-(D-ribitylamino)uracil = 6,7-dimethyl-8-(1-D-ribityl)lumazine + phosphate + 2 H2O + H(+). It functions in the pathway cofactor biosynthesis; riboflavin biosynthesis; riboflavin from 2-hydroxy-3-oxobutyl phosphate and 5-amino-6-(D-ribitylamino)uracil: step 1/2. Its function is as follows. Catalyzes the formation of 6,7-dimethyl-8-ribityllumazine by condensation of 5-amino-6-(D-ribitylamino)uracil with 3,4-dihydroxy-2-butanone 4-phosphate. This is the penultimate step in the biosynthesis of riboflavin. This chain is 6,7-dimethyl-8-ribityllumazine synthase, found in Leptothrix cholodnii (strain ATCC 51168 / LMG 8142 / SP-6) (Leptothrix discophora (strain SP-6)).